Reading from the N-terminus, the 212-residue chain is Thymidylate kinase (212 aa).

11–18 (GPDGAGKT) contacts ATP.

This sequence belongs to the thymidylate kinase family.

It carries out the reaction dTMP + ATP = dTDP + ADP. Phosphorylation of dTMP to form dTDP in both de novo and salvage pathways of dTTP synthesis. The polypeptide is Thymidylate kinase (Streptococcus mutans serotype c (strain ATCC 700610 / UA159)).